Here is a 205-residue protein sequence, read N- to C-terminus: Small ribosomal subunit protein uS4 (205 aa).

Residues 1 to 12 (MSKRIQAKHKLD) show a composition bias toward basic residues. Residues 1–49 (MSKRIQAKHKLDRRMGQNIWGRPKSPVNRREYGPGQHGQRRKGKLSDFG) form a disordered region. An S4 RNA-binding domain is found at 94 to 156 (RRLDAVIYRA…SKQLEIVVVA (63 aa)).

This sequence belongs to the universal ribosomal protein uS4 family. Part of the 30S ribosomal subunit. Contacts protein S5. The interaction surface between S4 and S5 is involved in control of translational fidelity.

In terms of biological role, one of the primary rRNA binding proteins, it binds directly to 16S rRNA where it nucleates assembly of the body of the 30S subunit. Its function is as follows. With S5 and S12 plays an important role in translational accuracy. The polypeptide is Small ribosomal subunit protein uS4 (Methylobacterium nodulans (strain LMG 21967 / CNCM I-2342 / ORS 2060)).